Reading from the N-terminus, the 286-residue chain is Putative 2-aminoethylphosphonate transport system permease protein PhnU (286 aa).

A run of 6 helical transmembrane segments spans residues 19–39 (WLLLPLLVLATLFFWPLSLIV), 76–96 (FFATAGCLLLGSVMSLILVFI), 111–131 (FIALPTFLITLAFTFIYGSAG), 150–170 (FLYSMQGVILAEITVFTPLVM), 202–222 (VIFPAALPALMAGGSLCLLLT), and 254–274 (YTVACMIALINIVLSLGLFSL). The region spanning 68–275 (LLNTLQIAFF…VLSLGLFSLY (208 aa)) is the ABC transmembrane type-1 domain.

This sequence belongs to the binding-protein-dependent transport system permease family.

The protein resides in the cell inner membrane. Its function is as follows. Probably part of the PhnSTUV complex (TC 3.A.1.11.5) involved in 2-aminoethylphosphonate import. Probably responsible for the translocation of the substrate across the membrane. The chain is Putative 2-aminoethylphosphonate transport system permease protein PhnU (phnU) from Salmonella typhimurium (strain LT2 / SGSC1412 / ATCC 700720).